The chain runs to 706 residues: Choline transporter-like protein 2 (706 aa).

The Cytoplasmic portion of the chain corresponds to 1 to 32 (MMELEGEKPNYGEPRKYDPTFKGPIYNRGCTD). The chain crosses the membrane as a helical span at residues 33–53 (IVCCIFFIICILGYVAVGILA). Over 54 to 232 (WSQGDPRKVI…KIFEDYTQSW (179 aa)) the chain is Extracellular. Asparagine 187 and asparagine 210 each carry an N-linked (GlcNAc...) asparagine glycan. A helical transmembrane segment spans residues 233 to 253 (YWILIGLVIAMLISLLFIVLL). Residues 254-256 (RFL) lie on the Cytoplasmic side of the membrane. Residues 257–277 (AGIMVWVMIVMVILVIGYGIF) form a helical membrane-spanning segment. At 278–315 (HCSMEYVSLKSEAGSNVTLKDLGFQTDFSVYLHIRQTW) the chain is on the extracellular side. N-linked (GlcNAc...) asparagine glycosylation is present at asparagine 293. A helical transmembrane segment spans residues 316–336 (LAFIIILAIVEVVIILLLIFL). The Cytoplasmic segment spans residues 337–364 (RNRILIAIALIKEASRAIGYVMSALFYP). A helical membrane pass occupies residues 365 to 385 (LFTFALLSIVIAYWAVTAVFL). Over 386–454 (STSNQPIYKV…LQFYNVFLFF (69 aa)) the chain is Extracellular. N-linked (GlcNAc...) asparagine glycosylation is found at asparagine 397 and asparagine 412. Residues 455-477 (WCANFVTALGQMTLAGAFASYYW) traverse the membrane as a helical segment. The Cytoplasmic segment spans residues 478-504 (ALVKPDDMPAFPIFSSLGRSLRYHTGS). The helical transmembrane segment at 505–525 (LAFGSLILSIIQIIRVLLEYI) threads the bilayer. Over 526 to 599 (DHKLQGTQNK…RVAVLDKVTD (74 aa)) the chain is Extracellular. Residues 600–620 (FLLFLGKLLIVGLVGIFAFFF) form a helical membrane-spanning segment. Over 621 to 638 (FSGRVKAFENTAPNLHYY) the chain is Cytoplasmic. A helical transmembrane segment spans residues 639–659 (WVPILTVVVGSYLIAHGFFSV). At 660–706 (YAMCVDTLFLCFLEDLERNDGSAERPYLMSDRLLKVLNKKNKPEPAE) the chain is on the extracellular side.

This sequence belongs to the CTL (choline transporter-like) family.

It localises to the cell membrane. Its subcellular location is the mitochondrion outer membrane. It catalyses the reaction choline(out) + n H(+)(in) = choline(in) + n H(+)(out). The catalysed reaction is ethanolamine(out) + n H(+)(in) = ethanolamine(in) + n H(+)(out). In terms of biological role, choline/H+ antiporter, mainly in mitochodria. Also acts as a low-affinity ethanolamine/H+ antiporter, regulating the supply of extracellular ethanolamine (Etn) for the CDP-Etn pathway, redistribute intracellular Etn and balance the CDP-Cho and CDP-Etn arms of the Kennedy pathway. This Salmo salar (Atlantic salmon) protein is Choline transporter-like protein 2 (slc44a2).